The following is a 254-amino-acid chain: Splicing factor tls1 (254 aa).

A compositionally biased stretch (basic and acidic residues) spans 69–83 (KEKQLNTANEPHEAN). Disordered regions lie at residues 69-90 (KEKQ…SAQS) and 195-216 (RKRQ…LRTS). The segment covering 195–204 (RKRQKKRARM) has biased composition (basic residues). The segment covering 205–216 (KEKLDSKALRTS) has biased composition (basic and acidic residues).

Belongs to the TLS1 family. In terms of assembly, component of the spliceosome. Interacts with brr2.

The protein localises to the cytoplasm. It is found in the nucleus. Its function is as follows. Plays a role in pre-mRNA splicing by facilitating excision of introns featuring long spacing between the branchpoint and 3'-splice site. Assists the splicing of several components involved in chromatin organization, such as several shelterin complex subunits. This chain is Splicing factor tls1, found in Schizosaccharomyces pombe (strain 972 / ATCC 24843) (Fission yeast).